A 488-amino-acid chain; its full sequence is Pup--protein ligase (488 aa).

A Mg(2+)-binding site is contributed by Glu-34. Arg-77 is an ATP binding site. Tyr-79 serves as a coordination point for Mg(2+). The active-site Proton acceptor is Asp-81. Glu-87 contributes to the Mg(2+) binding site. ATP contacts are provided by Thr-90 and Trp-453.

Belongs to the Pup ligase/Pup deamidase family. Pup-conjugating enzyme subfamily.

It carries out the reaction ATP + [prokaryotic ubiquitin-like protein]-L-glutamate + [protein]-L-lysine = ADP + phosphate + N(6)-([prokaryotic ubiquitin-like protein]-gamma-L-glutamyl)-[protein]-L-lysine.. The protein operates within protein degradation; proteasomal Pup-dependent pathway. It functions in the pathway protein modification; protein pupylation. Catalyzes the covalent attachment of the prokaryotic ubiquitin-like protein modifier Pup to the proteasomal substrate proteins, thereby targeting them for proteasomal degradation. This tagging system is termed pupylation. The ligation reaction involves the side-chain carboxylate of the C-terminal glutamate of Pup and the side-chain amino group of a substrate lysine. This chain is Pup--protein ligase, found in Bifidobacterium dentium (strain ATCC 27534 / DSM 20436 / JCM 1195 / Bd1).